Here is a 351-residue protein sequence, read N- to C-terminus: Aromatic amino acid aminotransferase (351 aa).

At Lys215 the chain carries N6-(pyridoxal phosphate)lysine.

It belongs to the class-II pyridoxal-phosphate-dependent aminotransferase family. In terms of assembly, homodimer. The cofactor is pyridoxal 5'-phosphate.

The enzyme catalyses an aromatic L-alpha-amino acid + 2-oxoglutarate = an aromatic oxo-acid + L-glutamate. Functionally, aminotransferase that catalyzes the conversion of aromatic amino acids and 2-oxoglutarate into corresponding aromatic oxo acids and L-glutamate. The sequence is that of Aromatic amino acid aminotransferase from Mycolicibacterium vanbaalenii (strain DSM 7251 / JCM 13017 / BCRC 16820 / KCTC 9966 / NRRL B-24157 / PYR-1) (Mycobacterium vanbaalenii).